The chain runs to 69 residues: Small ribosomal subunit protein uS7 (69 aa).

The protein belongs to the universal ribosomal protein uS7 family. As to quaternary structure, part of the 30S ribosomal subunit.

In terms of biological role, one of the primary rRNA binding proteins, it binds directly to 16S rRNA where it nucleates assembly of the head domain of the 30S subunit. Is located at the subunit interface close to the decoding center. The sequence is that of Small ribosomal subunit protein uS7 (rps7) from Methanococcoides methylutens.